A 405-amino-acid chain; its full sequence is Acetyl-CoA decarbonylase/synthase complex subunit delta (405 aa).

This sequence belongs to the CdhD family. As to quaternary structure, heterodimer of delta and gamma chains. The ACDS complex is made up of alpha, epsilon, beta, gamma and delta chains with a probable stoichiometry of (alpha(2)epsilon(2))(4)-beta(8)-(gamma(1)delta(1))(8).

Its function is as follows. Part of a complex that catalyzes the reversible cleavage of acetyl-CoA, allowing autotrophic growth from CO(2). Probably maintains the overall quaternary structure of the ACDS complex. This is Acetyl-CoA decarbonylase/synthase complex subunit delta from Methanocaldococcus jannaschii (strain ATCC 43067 / DSM 2661 / JAL-1 / JCM 10045 / NBRC 100440) (Methanococcus jannaschii).